Consider the following 358-residue polypeptide: Very long chain fatty acid elongase AAEL008004 (358 aa).

Transmembrane regions (helical) follow at residues 26-46 (WPLM…VYLV), 66-86 (LILY…EIGI), 115-135 (ACWW…FFVM), 147-167 (VIHH…TPGG), 171-191 (FFGL…LFTA), 207-227 (TSLQ…LLFI), and 234-254 (AFVW…NEFY). Positions 285–295 (SAVSSNGSAIT) are enriched in polar residues. Residues 285-322 (SAVSSNGSAITANGHHGKNGSVHHHSNGSATSNGTSLL) form a disordered region. Over residues 299–310 (HHGKNGSVHHHS) the composition is skewed to basic residues. The segment covering 311–322 (NGSATSNGTSLL) has biased composition (polar residues).

Belongs to the ELO family.

It localises to the membrane. It catalyses the reaction a very-long-chain acyl-CoA + malonyl-CoA + H(+) = a very-long-chain 3-oxoacyl-CoA + CO2 + CoA. In terms of biological role, could be implicated in synthesis of very long chain fatty acids. This is Very long chain fatty acid elongase AAEL008004 from Aedes aegypti (Yellowfever mosquito).